Reading from the N-terminus, the 434-residue chain is 3-phosphoshikimate 1-carboxyvinyltransferase (434 aa).

Residues Lys-22, Ser-23, and Arg-27 each contribute to the 3-phosphoshikimate site. Lys-22 provides a ligand contact to phosphoenolpyruvate. Phosphoenolpyruvate is bound by residues Gly-93 and Arg-121. 3-phosphoshikimate is bound by residues Ser-168, Ser-169, Gln-170, Ser-199, Asp-320, and Lys-347. Gln-170 contacts phosphoenolpyruvate. Residue Asp-320 is the Proton acceptor of the active site. Arg-351, Arg-394, and Lys-419 together coordinate phosphoenolpyruvate.

The protein belongs to the EPSP synthase family. As to quaternary structure, monomer.

The protein resides in the cytoplasm. The catalysed reaction is 3-phosphoshikimate + phosphoenolpyruvate = 5-O-(1-carboxyvinyl)-3-phosphoshikimate + phosphate. It participates in metabolic intermediate biosynthesis; chorismate biosynthesis; chorismate from D-erythrose 4-phosphate and phosphoenolpyruvate: step 6/7. Its function is as follows. Catalyzes the transfer of the enolpyruvyl moiety of phosphoenolpyruvate (PEP) to the 5-hydroxyl of shikimate-3-phosphate (S3P) to produce enolpyruvyl shikimate-3-phosphate and inorganic phosphate. In Paraburkholderia phytofirmans (strain DSM 17436 / LMG 22146 / PsJN) (Burkholderia phytofirmans), this protein is 3-phosphoshikimate 1-carboxyvinyltransferase.